The primary structure comprises 205 residues: Small ribosomal subunit protein uS4c (205 aa).

The S4 RNA-binding domain occupies 93 to 154 (MRLDNTIFRL…RTQTIALIQQ (62 aa)).

It belongs to the universal ribosomal protein uS4 family. As to quaternary structure, part of the 30S ribosomal subunit. Contacts protein S5. The interaction surface between S4 and S5 is involved in control of translational fidelity.

The protein localises to the plastid. Its subcellular location is the chloroplast. Its function is as follows. One of the primary rRNA binding proteins, it binds directly to 16S rRNA where it nucleates assembly of the body of the 30S subunit. With S5 and S12 plays an important role in translational accuracy. In Chaetosphaeridium globosum (Charophycean green alga), this protein is Small ribosomal subunit protein uS4c (rps4).